The primary structure comprises 244 residues: Phosphoadenosine 5'-phosphosulfate reductase (244 aa).

Cys239 serves as the catalytic Nucleophile; cysteine thiosulfonate intermediate.

Belongs to the PAPS reductase family. CysH subfamily.

It localises to the cytoplasm. It carries out the reaction [thioredoxin]-disulfide + sulfite + adenosine 3',5'-bisphosphate + 2 H(+) = [thioredoxin]-dithiol + 3'-phosphoadenylyl sulfate. Its pathway is sulfur metabolism; hydrogen sulfide biosynthesis; sulfite from sulfate: step 3/3. In terms of biological role, catalyzes the formation of sulfite from phosphoadenosine 5'-phosphosulfate (PAPS) using thioredoxin as an electron donor. This Serratia proteamaculans (strain 568) protein is Phosphoadenosine 5'-phosphosulfate reductase.